Consider the following 112-residue polypeptide: Ferredoxin-2 (112 aa).

2 consecutive 4Fe-4S ferredoxin-type domains span residues 2 to 30 (TYVVTDNCIACKYTDCVEVCPVDCFYEGE) and 31 to 60 (NTLVIHPDECIDCGVCEPECPADAIRPDTE). 2 residues coordinate [3Fe-4S] cluster: Cys-9 and Cys-17. Positions 21, 40, 43, and 46 each coordinate [4Fe-4S] cluster. Cys-50 contacts [3Fe-4S] cluster. Residues 85–103 (DPMPDHKKYDGETGKREKY) are compositionally biased toward basic and acidic residues. Residues 85-112 (DPMPDHKKYDGETGKREKYFSPNPGTGD) form a disordered region.

[4Fe-4S] cluster is required as a cofactor. The cofactor is [3Fe-4S] cluster.

Functionally, ferredoxins are iron-sulfur proteins that transfer electrons in a wide variety of metabolic reactions. The chain is Ferredoxin-2 (fdxA) from Rhodobacter capsulatus (strain ATCC BAA-309 / NBRC 16581 / SB1003).